The sequence spans 889 residues: Coatomer subunit gamma-2 (889 aa).

HEAT repeat units follow at residues 67–102, 103–140, 289–326, 328–360, and 361–398; these read VEAT…SPSA, DEVI…STLL, RELT…THPL, VTNC…TGNE, and SSVD…KFPL. Residues 596–617 are disordered; the sequence is PLAEKKTTGKKPTGPASALSGP.

It belongs to the COPG family. In terms of assembly, oligomeric complex that consists of at least the alpha, beta, beta', gamma, delta, epsilon and zeta subunits.

It localises to the cytoplasm. Its subcellular location is the golgi apparatus membrane. The protein resides in the cytoplasmic vesicle. The protein localises to the COPI-coated vesicle membrane. In terms of biological role, the coatomer is a cytosolic protein complex that binds to dilysine motifs and reversibly associates with Golgi non-clathrin-coated vesicles, which further mediate biosynthetic protein transport from the ER, via the Golgi up to the trans Golgi network. Coatomer complex is required for budding from Golgi membranes, and is essential for the retrograde Golgi-to-ER transport of dilysine-tagged proteins. The protein is Coatomer subunit gamma-2 of Oryza sativa subsp. japonica (Rice).